Reading from the N-terminus, the 31-residue chain is Cytochrome b6-f complex subunit 6 (31 aa).

The chain crosses the membrane as a helical span at residues 3–23 (TIISYFGFLLASIIFTLILFI).

It belongs to the PetL family. The 4 large subunits of the cytochrome b6-f complex are cytochrome b6, subunit IV (17 kDa polypeptide, PetD), cytochrome f and the Rieske protein, while the 4 small subunits are PetG, PetL, PetM and PetN. The complex functions as a dimer.

The protein localises to the plastid. Its subcellular location is the chloroplast thylakoid membrane. Functionally, component of the cytochrome b6-f complex, which mediates electron transfer between photosystem II (PSII) and photosystem I (PSI), cyclic electron flow around PSI, and state transitions. PetL is important for photoautotrophic growth as well as for electron transfer efficiency and stability of the cytochrome b6-f complex. The chain is Cytochrome b6-f complex subunit 6 from Abies homolepis (Nikko fir).